Reading from the N-terminus, the 504-residue chain is Protein Dok-7 (504 aa).

One can recognise a PH domain in the interval Ala-4–Gly-109. Residues Arg-105–Phe-210 form the IRS-type PTB domain. Disordered regions lie at residues Phe-210–Ala-232, Leu-248–Tyr-348, and Ser-371–Gly-483. Positions Leu-263–Arg-280 are enriched in low complexity. Composition is skewed to polar residues over residues Pro-285–Glu-297, Gly-331–Ala-341, and Pro-421–Gly-430.

Homodimer. Forms a heterotetramer composed of 2 DOK7 and 2 MUSK molecules which facilitates MUSK trans-autophosphorylation on tyrosine residue and activation. Interacts (via IRS-type PTB domain) with MUSK (via cytoplasmic part); requires MUSK phosphorylation.

The protein localises to the cell membrane. It localises to the synapse. Its function is as follows. Probable muscle-intrinsic activator of MUSK that plays an essential role in neuromuscular synaptogenesis. Acts in aneural activation of MUSK and subsequent acetylcholine receptor (AchR) clustering in myotubes. Induces autophosphorylation of MUSK. The polypeptide is Protein Dok-7 (Dok7) (Mus musculus (Mouse)).